The primary structure comprises 102 residues: Complement inhibitor RaCI3 (102 aa).

Residues 1 to 24 form the signal peptide; that stretch reads MAALNGLVLLLLTISAMFISECYS. 3 disulfides stabilise this stretch: Cys37-Cys61, Cys42-Cys63, and Cys57-Cys78.

The protein belongs to the RaCI family. As to expression, expressed in salivary glands.

It localises to the secreted. Its function is as follows. Complement inhibitor. Prevents complement-mediated C5 activation by binding to C5. Binds C5 at a different binding site than the other tick complement inhibitors OmCI and CirpT1, and the drug eculizumab. Inhibits complement in human and guinea pig but not in other species tested (rabbit, rat, mouse, and pig). The protein is Complement inhibitor RaCI3 of Dermacentor andersoni (Rocky mountain wood tick).